Here is a 478-residue protein sequence, read N- to C-terminus: Protein nucleotidyltransferase YdiU (478 aa).

The ATP site is built by G84, G86, R87, K107, D119, G120, R170, and R177. Catalysis depends on D246, which acts as the Proton acceptor. Mg(2+)-binding residues include N247 and D256. Residue D256 coordinates ATP.

Belongs to the SELO family. Requires Mg(2+) as cofactor. Mn(2+) is required as a cofactor.

The catalysed reaction is L-seryl-[protein] + ATP = 3-O-(5'-adenylyl)-L-seryl-[protein] + diphosphate. The enzyme catalyses L-threonyl-[protein] + ATP = 3-O-(5'-adenylyl)-L-threonyl-[protein] + diphosphate. It carries out the reaction L-tyrosyl-[protein] + ATP = O-(5'-adenylyl)-L-tyrosyl-[protein] + diphosphate. It catalyses the reaction L-histidyl-[protein] + UTP = N(tele)-(5'-uridylyl)-L-histidyl-[protein] + diphosphate. The catalysed reaction is L-seryl-[protein] + UTP = O-(5'-uridylyl)-L-seryl-[protein] + diphosphate. The enzyme catalyses L-tyrosyl-[protein] + UTP = O-(5'-uridylyl)-L-tyrosyl-[protein] + diphosphate. Functionally, nucleotidyltransferase involved in the post-translational modification of proteins. It can catalyze the addition of adenosine monophosphate (AMP) or uridine monophosphate (UMP) to a protein, resulting in modifications known as AMPylation and UMPylation. In Escherichia coli O6:K15:H31 (strain 536 / UPEC), this protein is Protein nucleotidyltransferase YdiU.